We begin with the raw amino-acid sequence, 353 residues long: MYYLSDLSHYAFFTYISVRAGFAFFIALCLSLFLMPKFITWAKAKNASQPIYEYAPETHKTKCHTPTMGGLIFISSAVIASLFCIKFDNIFAISALLCLILFCLIGLIDDLGKVLKKDNHSGLSPRMKLLAQIIAGLICILPLYFSSELSTELFIPFYKHPLFDMEIFAIAFWILVLISSSNAVNLTDGLDGLATVPGIFSLSTLGIFLYLSGNLNYSEYLLLPKIQGLGEVVIICAALIGALMGFLWYNCYPAQVFMGDSGSLALGGFIGFLAVISKNEILLLLIGFVFVLETVSVILQVGSFKIFNKRVFKMAPIHHHFEKVGWVENKIIVRFWMIALLSNLLALASIKLR.

10 helical membrane passes run 22 to 42, 65 to 85, 88 to 108, 129 to 149, 161 to 181, 192 to 212, 228 to 248, 256 to 276, 281 to 301, and 330 to 350; these read FAFFIALCLSLFLMPKFITWA, TPTMGGLIFISSAVIASLFCI, DNIFAISALLCLILFCLIGLI, LLAQIIAGLICILPLYFSSEL, PLFDMEIFAIAFWILVLISSS, GLATVPGIFSLSTLGIFLYLS, GLGEVVIICAALIGALMGFLW, VFMGDSGSLALGGFIGFLAVI, ILLLLIGFVFVLETVSVILQV, and KIIVRFWMIALLSNLLALASI.

It belongs to the glycosyltransferase 4 family. MraY subfamily. Requires Mg(2+) as cofactor.

The protein localises to the cell inner membrane. It carries out the reaction UDP-N-acetyl-alpha-D-muramoyl-L-alanyl-gamma-D-glutamyl-meso-2,6-diaminopimeloyl-D-alanyl-D-alanine + di-trans,octa-cis-undecaprenyl phosphate = di-trans,octa-cis-undecaprenyl diphospho-N-acetyl-alpha-D-muramoyl-L-alanyl-D-glutamyl-meso-2,6-diaminopimeloyl-D-alanyl-D-alanine + UMP. It functions in the pathway cell wall biogenesis; peptidoglycan biosynthesis. Functionally, catalyzes the initial step of the lipid cycle reactions in the biosynthesis of the cell wall peptidoglycan: transfers peptidoglycan precursor phospho-MurNAc-pentapeptide from UDP-MurNAc-pentapeptide onto the lipid carrier undecaprenyl phosphate, yielding undecaprenyl-pyrophosphoryl-MurNAc-pentapeptide, known as lipid I. The protein is Phospho-N-acetylmuramoyl-pentapeptide-transferase of Campylobacter jejuni subsp. jejuni serotype O:2 (strain ATCC 700819 / NCTC 11168).